A 275-amino-acid polypeptide reads, in one-letter code: Large ribosomal subunit protein uL2 (275 aa).

Disordered stretches follow at residues Lys-28–Lys-59 and Ala-224–Arg-275. Residues Asp-35 to Asn-46 are compositionally biased toward polar residues. Residues Thr-50 to Lys-59 are compositionally biased toward basic residues.

It belongs to the universal ribosomal protein uL2 family. In terms of assembly, part of the 50S ribosomal subunit. Forms a bridge to the 30S subunit in the 70S ribosome.

Its function is as follows. One of the primary rRNA binding proteins. Required for association of the 30S and 50S subunits to form the 70S ribosome, for tRNA binding and peptide bond formation. It has been suggested to have peptidyltransferase activity; this is somewhat controversial. Makes several contacts with the 16S rRNA in the 70S ribosome. The sequence is that of Large ribosomal subunit protein uL2 from Paraburkholderia phymatum (strain DSM 17167 / CIP 108236 / LMG 21445 / STM815) (Burkholderia phymatum).